Reading from the N-terminus, the 598-residue chain is Ceramide transfer protein (598 aa).

Residues 1-11 (MSDNQSWNSSG) show a composition bias toward polar residues. The segment at 1 to 24 (MSDNQSWNSSGSEEDPETESGPPV) is disordered. Positions 23-117 (PVERCGVLSK…WIDAIEQHKT (95 aa)) constitute a PH domain. Position 126 is a phosphoserine (Ser-126). A Phosphoserine; by PKD modification is found at Ser-132. Ser-135 bears the Phosphoserine mark. The interval 202–221 (DDEDDFPTTRSDGDFLHNTN) is disordered. A coiled-coil region spans residues 268-301 (KREESWQKRHDKEMEKRRRLEEAYKNAMAELKKK). Phosphoserine is present on Ser-315. The FFAT signature appears at 321 to 327 (EFFDAVE). Residues 363 to 592 (GTHRFVQKVE…FTSYVQEKTA (230 aa)) enclose the START domain. Residues Glu-446, Gln-467, Asn-504, and Tyr-553 each contribute to the an N-acylsphing-4-enine site.

As to quaternary structure, interacts with VAPA and VAPB. Interaction with VAPB is less efficient than with VAPA. Interacts (via FFAT motif) with the MOSPD2 (via MSP domain). In terms of processing, phosphorylation on Ser-132 decreases the affinity toward phosphatidylinositol 4-phosphate at Golgi membranes and reduces ceramide transfer activity. Inactivated by hyperphosphorylation of serine residues by CSNK1G2/CK1 that triggers dissociation from the Golgi complex, thus down-regulating ER-to-Golgi transport of ceramide and sphingomyelin synthesis.

Its subcellular location is the cytoplasm. The protein resides in the golgi apparatus. The protein localises to the endoplasmic reticulum. It carries out the reaction N-hexadecanoylsphing-4-enine(in) = N-hexadecanoylsphing-4-enine(out). Its function is as follows. Shelters ceramides and diacylglycerol lipids inside its START domain and mediates the intracellular trafficking of ceramides and diacylglycerol lipids in a non-vesicular manner. This is Ceramide transfer protein (CERT1) from Cricetulus griseus (Chinese hamster).